The chain runs to 1028 residues: Unconventional myosin-Ic-A (1028 aa).

At Met1 the chain carries N-acetylmethionine. Residues 12–696 form the Myosin motor domain; it reads GVQDFVLLEN…TLFATEDALE (685 aa). 105–112 contacts ATP; it reads GESGSGKT. Position 348 is an N6-methyllysine (Lys348). Residues 573 to 595 form an actin-binding region; it reads LSKLMEILMSKEPSYVRCIKPND. IQ domains are found at residues 699 to 728 and 722 to 751; these read KQGI…SAIN and MKHS…AVDV. One can recognise a TH1 domain in the interval 850 to 1024; the sequence is KDNYPQSVPR…NGHLSVVAPR (175 aa).

The protein belongs to the TRAFAC class myosin-kinesin ATPase superfamily. Myosin family. Interacts (via its IQ motifs) with calmodulin.

It is found in the cytoplasm. The protein resides in the cell membrane. It localises to the cell projection. The protein localises to the stereocilium membrane. In terms of biological role, myosins are actin-based motor molecules with ATPase activity. Unconventional myosins serve in intracellular movements. Their highly divergent tails are presumed to bind to membranous compartments, which would be moved relative to actin filaments. Involved in egg activation by coupling dynamic actin to membrane. In Xenopus laevis (African clawed frog), this protein is Unconventional myosin-Ic-A (myo1c-a).